Consider the following 647-residue polypeptide: MKKEEYLEKVALANLWMRAYYEKDEPLASDEEYDALIRELRVFEEQNKDEISKDSPTQKIAPTIQSEFKKIAHLKRMWSMEDVFDESELRAWAKRAKCEKNFFIEPKFDGASLNLLYENGKLVSGATRGDGEVGEDITLNVFEIENIPKNIAYKERIEIRGEVVILKDDFEKINEKRALLNQSLFANPRNAASGSLRQLDTSITKERNLKFYPWGVGENTLNFTKHSEVMQFIRELGFLKDDFVRLCANLDEVLKAYDELLALREKKPMMMDGMVVRVDDLALCEELGYTVKFPKFMAAFKFPALEKTTRLIGVNLQVGRSGVITPVAVLEPVNLDGVVVKSATLHNFDEIARLDVKINDFVSVIRSGDVIPKITKVFKERREGLEMEISRPKLCPTCQSELLDEGTLIKCQNIDCEDRLVNSIIHFVSKKCLNIDGLGENIVELLYKHKKITTLESIFHLKFNDFEGLEGFKEKKINNLLNAIEQARECELFRFITALGIEHIGEVAAKKLSLSFGKEWYKQSFEAYANLEGFGEQMALSLCEFTRVNRTRIDEFYKLLNLKIEKLEIKSDGVIFGKTFVITGTLSRPRDEFKALIEKLGGKVSGSVSKKTDYVLFGEEAGSKLSKAKELEVKCIDESAFNELVKE.

NAD(+) contacts are provided by residues 30–34, 79–80, and Glu-105; these read DEEYD and SM. Lys-107 functions as the N6-AMP-lysine intermediate in the catalytic mechanism. NAD(+)-binding residues include Arg-128, Glu-162, and Lys-301. Zn(2+) is bound by residues Cys-395, Cys-398, Cys-411, and Cys-416. Residues 570–647 enclose the BRCT domain; the sequence is KSDGVIFGKT…ESAFNELVKE (78 aa).

The protein belongs to the NAD-dependent DNA ligase family. LigA subfamily. The cofactor is Mg(2+). Requires Mn(2+) as cofactor.

It carries out the reaction NAD(+) + (deoxyribonucleotide)n-3'-hydroxyl + 5'-phospho-(deoxyribonucleotide)m = (deoxyribonucleotide)n+m + AMP + beta-nicotinamide D-nucleotide.. Functionally, DNA ligase that catalyzes the formation of phosphodiester linkages between 5'-phosphoryl and 3'-hydroxyl groups in double-stranded DNA using NAD as a coenzyme and as the energy source for the reaction. It is essential for DNA replication and repair of damaged DNA. The sequence is that of DNA ligase from Campylobacter jejuni subsp. jejuni serotype O:2 (strain ATCC 700819 / NCTC 11168).